We begin with the raw amino-acid sequence, 376 residues long: Succinyl-diaminopimelate desuccinylase (376 aa).

His67 provides a ligand contact to Zn(2+). The active site involves Asp69. Asp100 serves as a coordination point for Zn(2+). The Proton acceptor role is filled by Glu134. Positions 135, 163, and 349 each coordinate Zn(2+).

Belongs to the peptidase M20A family. DapE subfamily. Homodimer. The cofactor is Zn(2+). It depends on Co(2+) as a cofactor.

It catalyses the reaction N-succinyl-(2S,6S)-2,6-diaminopimelate + H2O = (2S,6S)-2,6-diaminopimelate + succinate. Its pathway is amino-acid biosynthesis; L-lysine biosynthesis via DAP pathway; LL-2,6-diaminopimelate from (S)-tetrahydrodipicolinate (succinylase route): step 3/3. Functionally, catalyzes the hydrolysis of N-succinyl-L,L-diaminopimelic acid (SDAP), forming succinate and LL-2,6-diaminopimelate (DAP), an intermediate involved in the bacterial biosynthesis of lysine and meso-diaminopimelic acid, an essential component of bacterial cell walls. This Xanthomonas campestris pv. campestris (strain B100) protein is Succinyl-diaminopimelate desuccinylase.